A 148-amino-acid polypeptide reads, in one-letter code: Deoxyuridine 5'-triphosphate nucleotidohydrolase (148 aa).

Residues 68–70 (RSG), N81, 85–87 (TID), and K95 each bind substrate.

This sequence belongs to the dUTPase family. Mg(2+) serves as cofactor.

The enzyme catalyses dUTP + H2O = dUMP + diphosphate + H(+). It participates in pyrimidine metabolism; dUMP biosynthesis; dUMP from dCTP (dUTP route): step 2/2. This enzyme is involved in nucleotide metabolism: it produces dUMP, the immediate precursor of thymidine nucleotides and it decreases the intracellular concentration of dUTP so that uracil cannot be incorporated into DNA. The polypeptide is Deoxyuridine 5'-triphosphate nucleotidohydrolase (Rickettsia massiliae (strain Mtu5)).